The sequence spans 298 residues: UDP-3-O-acyl-N-acetylglucosamine deacetylase (298 aa).

Zn(2+) is bound by residues His79, His239, and Asp243. His266 acts as the Proton donor in catalysis.

The protein belongs to the LpxC family. The cofactor is Zn(2+).

The enzyme catalyses a UDP-3-O-[(3R)-3-hydroxyacyl]-N-acetyl-alpha-D-glucosamine + H2O = a UDP-3-O-[(3R)-3-hydroxyacyl]-alpha-D-glucosamine + acetate. Its pathway is glycolipid biosynthesis; lipid IV(A) biosynthesis; lipid IV(A) from (3R)-3-hydroxytetradecanoyl-[acyl-carrier-protein] and UDP-N-acetyl-alpha-D-glucosamine: step 2/6. Functionally, catalyzes the hydrolysis of UDP-3-O-myristoyl-N-acetylglucosamine to form UDP-3-O-myristoylglucosamine and acetate, the committed step in lipid A biosynthesis. The polypeptide is UDP-3-O-acyl-N-acetylglucosamine deacetylase (Wigglesworthia glossinidia brevipalpis).